A 935-amino-acid chain; its full sequence is Peptidyl-glycine alpha-amidating monooxygenase A (935 aa).

An N-terminal signal peptide occupies residues 1–36 (MASLSSSFLVLFLLFQNSCYCFRSPLSVFKRYEEST). Residues 1-390 (MASLSSSFLV…KREEEEVLDQ (390 aa)) are peptidylglycine alpha-hydroxylating monooxygenase. Residues 37-825 (RSLSNDCLGT…VQESSAGVSF (789 aa)) lie on the Intragranular side of the membrane. 5 disulfide bridges follow: Cys43–Cys182, Cys77–Cys122, Cys110–Cys127, Cys223–Cys330, and Cys289–Cys311. His103 and His104 together coordinate Cu(2+). Cu(2+) is bound by residues His168, His238, His240, and Met310. A disordered region spans residues 362 to 385 (HGHHHTEAEPEKNTGLQQPKREEE). A peptidyl-alpha-hydroxyglycine alpha-amidating lyase region spans residues 391–712 (DVHLEEDTDW…SPSKAEHRSV (322 aa)). Residue Arg426 coordinates a protein. 3 NHL repeats span residues 463-504 (SKVL…LGAG), 512-557 (LGRA…FSPN), and 565-609 (GEET…FHAE). 2 disulfides stabilise this stretch: Cys526-Cys547 and Cys594-Cys605. Positions 546 and 598 each coordinate a protein. The N-linked (GlcNAc...) asparagine glycan is linked to Asn658. The NHL 4 repeat unit spans residues 662–705 (GDILDTFIPARKNFDMPHDIAAADDGTVYVGDAHANAVWKFSPS). Positions 728 to 751 (FETHIRSRPKTNESVEKQTQEKQQ) are enriched in basic and acidic residues. Disordered regions lie at residues 728-764 (FETH…TQEK) and 778-812 (QEKQ…TQEK). A glycan (N-linked (GlcNAc...) asparagine) is linked at Asn739. Positions 755-764 (NSAGVSTQEK) are enriched in polar residues. A helical membrane pass occupies residues 826 to 846 (VLIITLLIIPIAVLIAIAIFI). Topologically, residues 847-935 (RWRKVRMYGG…PIPPAPVSSS (89 aa)) are cytoplasmic. The disordered stretch occupies residues 896–935 (KGFDRLSTEGSDQEKDDDDGSDSEEEYSAPPIPPAPVSSS). The span at 909-922 (EKDDDDGSDSEEEY) shows a compositional bias: acidic residues. Pro residues predominate over residues 925–935 (PPIPPAPVSSS).

In the C-terminal section; belongs to the peptidyl-alpha-hydroxyglycine alpha-amidating lyase family. The protein in the N-terminal section; belongs to the copper type II ascorbate-dependent monooxygenase family. Monomer. The cofactor is Zn(2+). Requires Cu(2+) as cofactor.

The protein resides in the cytoplasmic vesicle. It localises to the secretory vesicle membrane. The enzyme catalyses a [peptide]-C-terminal glycine + 2 L-ascorbate + O2 = a [peptide]-C-terminal (2S)-2-hydroxyglycine + 2 monodehydro-L-ascorbate radical + H2O. It carries out the reaction a [peptide]-C-terminal (2S)-2-hydroxyglycine = a [peptide]-C-terminal amide + glyoxylate. Functionally, bifunctional enzyme that catalyzes amidation of the C-terminus of proteins. Alpha-amidation is present at the C-terminus of many endocrine hormones and neuropeptides and is required for their activity. C-terminal amidation also takes place in response to protein fragmentation triggered by oxidative stress, promoting degradation of amidated protein fragments by the proteasome. Alpha-amidation involves two sequential reactions, both of which are catalyzed by separate catalytic domains of the enzyme. The first step, catalyzed by peptidyl alpha-hydroxylating monooxygenase (PHM) domain, is the copper-, ascorbate-, and O2- dependent stereospecific hydroxylation (with S stereochemistry) at the alpha-carbon (C-alpha) of the C-terminal glycine of the peptidylglycine substrate. The second step, catalyzed by the peptidylglycine amidoglycolate lyase (PAL) domain, is the zinc-dependent cleavage of the N-C-alpha bond, producing the alpha-amidated peptide and glyoxylate. The sequence is that of Peptidyl-glycine alpha-amidating monooxygenase A (pam-a) from Xenopus laevis (African clawed frog).